We begin with the raw amino-acid sequence, 314 residues long: Methionyl-tRNA formyltransferase (314 aa).

111-114 (SLLP) serves as a coordination point for (6S)-5,6,7,8-tetrahydrofolate.

It belongs to the Fmt family.

The catalysed reaction is L-methionyl-tRNA(fMet) + (6R)-10-formyltetrahydrofolate = N-formyl-L-methionyl-tRNA(fMet) + (6S)-5,6,7,8-tetrahydrofolate + H(+). In terms of biological role, attaches a formyl group to the free amino group of methionyl-tRNA(fMet). The formyl group appears to play a dual role in the initiator identity of N-formylmethionyl-tRNA by promoting its recognition by IF2 and preventing the misappropriation of this tRNA by the elongation apparatus. This is Methionyl-tRNA formyltransferase from Chlorobium luteolum (strain DSM 273 / BCRC 81028 / 2530) (Pelodictyon luteolum).